A 225-amino-acid polypeptide reads, in one-letter code: Sugar fermentation stimulation protein homolog (225 aa).

This sequence belongs to the SfsA family.

The chain is Sugar fermentation stimulation protein homolog from Sulfolobus acidocaldarius (strain ATCC 33909 / DSM 639 / JCM 8929 / NBRC 15157 / NCIMB 11770).